The following is a 62-amino-acid chain: UPF0434 protein SPO3421 (62 aa).

It belongs to the UPF0434 family.

In Ruegeria pomeroyi (strain ATCC 700808 / DSM 15171 / DSS-3) (Silicibacter pomeroyi), this protein is UPF0434 protein SPO3421.